A 1673-amino-acid chain; its full sequence is Protein-methionine sulfoxide oxidase mical3b (1673 aa).

Residues 2–492 form a monooxygenase domain region; it reads WDGQSEMCQA…RHLIDTGEGP (491 aa). Residues cysteine 96, 96–124, glutamate 115, arginine 117, arginine 122, asparagine 124, and aspartate 396 each bind FAD; that span reads CGLR…SRNN. Positions 512 to 618 constitute a Calponin-homology (CH) domain; that stretch reads MARYSKLLSW…YLSQLHELLK (107 aa). The disordered stretch occupies residues 647-714; that stretch reads SKLGQSLSRK…PKASEGHSKV (68 aa). A compositionally biased stretch (basic and acidic residues) spans 661-671; it reads DKKEKEADSVG. An LIM zinc-binding domain is found at 791 to 853; the sequence is DVCYFCGRRV…KHHFSFRLAS (63 aa). Residues 882–892 show a composition bias toward low complexity; that stretch reads LSSLGSVGTAT. Disordered stretches follow at residues 882-901, 918-938, 951-1100, 1159-1188, and 1357-1393; these read LSSL…SSTH, RIEL…LQEV, SLQE…KRSE, QSAR…TDGD, and GPDA…RETG. A compositionally biased stretch (basic and acidic residues) spans 973–992; that stretch reads LVWKKGEELHARTNGERKLD. Composition is skewed to acidic residues over residues 993-1002 and 1010-1041; these read LEEELKEEEG and EGEE…DPDI. Residues 1081–1094 show a composition bias toward low complexity; sequence SDLTPDPSTTPESS. Over residues 1159–1182 the composition is skewed to polar residues; that stretch reads QSARICDSSTQTHSVTDLQETSPL. Coiled-coil stretches lie at residues 1475–1531 and 1573–1638; these read EEEL…AVEK and QEKN…VEQR. The 167-residue stretch at 1495 to 1661 folds into the bMERB domain; that stretch reads KQEELRRLHR…EKEEDSDLEA (167 aa).

Belongs to the Mical family. Requires FAD as cofactor.

It is found in the cytoplasm. Its subcellular location is the cytoskeleton. It localises to the nucleus. The enzyme catalyses L-methionyl-[F-actin] + NADPH + O2 + H(+) = L-methionyl-(R)-S-oxide-[F-actin] + NADP(+) + H2O. Functionally, monooxygenase that promotes depolymerization of F-actin by mediating oxidation of specific methionine residues on actin. Acts by modifying actin subunits through the addition of oxygen to form methionine-sulfoxide, leading to promote actin filament severing and prevent repolymerization. Involved in exocytic vesicles tethering and fusion: the monooxygenase activity is required for this process. This is Protein-methionine sulfoxide oxidase mical3b (mical3b) from Danio rerio (Zebrafish).